Here is a 397-residue protein sequence, read N- to C-terminus: S-adenosylmethionine synthase (397 aa).

His-15 is a binding site for ATP. Position 17 (Asp-17) interacts with Mg(2+). Glu-43 is a binding site for K(+). Positions 56 and 99 each coordinate L-methionine. A flexible loop region spans residues 99-109 (QSGDIAMGVDE). ATP contacts are provided by residues 175–177 (DGK), 241–242 (RF), Asp-250, 256–257 (RK), Ala-273, and Lys-277. Residue Asp-250 participates in L-methionine binding. Lys-281 contacts L-methionine.

The protein belongs to the AdoMet synthase family. In terms of assembly, homotetramer; dimer of dimers. Mg(2+) serves as cofactor. It depends on K(+) as a cofactor.

Its subcellular location is the cytoplasm. The catalysed reaction is L-methionine + ATP + H2O = S-adenosyl-L-methionine + phosphate + diphosphate. The protein operates within amino-acid biosynthesis; S-adenosyl-L-methionine biosynthesis; S-adenosyl-L-methionine from L-methionine: step 1/1. Catalyzes the formation of S-adenosylmethionine (AdoMet) from methionine and ATP. The overall synthetic reaction is composed of two sequential steps, AdoMet formation and the subsequent tripolyphosphate hydrolysis which occurs prior to release of AdoMet from the enzyme. The chain is S-adenosylmethionine synthase from Clostridioides difficile (strain 630) (Peptoclostridium difficile).